We begin with the raw amino-acid sequence, 395 residues long: THAP domain-containing protein 5 (395 aa).

Residues 1 to 84 form a THAP-type zinc finger; the sequence is MPRYCAAICC…LKQTAVPTIF (84 aa). The interval 85–112 is disordered; that stretch reads SLPEDNQGKDPSKKKSQKKNLEDEKEVC. Basic and acidic residues predominate over residues 90-112; the sequence is NQGKDPSKKKSQKKNLEDEKEVC. The HCFC1-binding motif (HBM) signature appears at 321 to 324; it reads EHSY. A coiled-coil region spans residues 348-382; it reads LELKEQQTLGRLKSLEALIRQLKQENWLSEENVKI.

In terms of assembly, interacts with HTRA2; under apoptotic conditions. Interacts with ABRAXAS2. Post-translationally, cleaved by HTRA2 during apoptosis. Detected in heart. Detected in brain and muscle (at protein level). Highly expressed in the heart. Also found in brain and skeletal muscle.

The protein localises to the nucleus. In terms of biological role, has sequence-specific DNA-binding activity and can function as transcriptional repressor (in vitro). May be a regulator of cell cycle: THAP5 overexpression in human cell lines causes cell cycle arrest at G2/M phase. The sequence is that of THAP domain-containing protein 5 (THAP5) from Homo sapiens (Human).